The chain runs to 601 residues: Serine/threonine-protein phosphatase 2A 65 kDa regulatory subunit A beta isoform (601 aa).

An N-acetylalanine modification is found at A2. HEAT repeat units lie at residues 20–58 (DSLY…GVER), 59–96 (TRTE…GGPD), 97–135 (FAHC…TPVA), 136–173 (LEAH…ASNA), 174–212 (VKAE…ELDS), 213–251 (VKTE…SQED), 252–290 (LEAL…GPKI), 291–333 (ALSD…RETV), 334–372 (IMNQ…GKEN), 373–411 (TIEH…GIRQ), 412–450 (LSQS…GVEF), 451–489 (FDEK…GTEW), 490–528 (AQNT…GKEI), 529–567 (TTKQ…DTNA), and 568–601 (LQGE…LALA).

The protein belongs to the phosphatase 2A regulatory subunit A family. PP2A consists of a common heterodimeric core enzyme, composed of a 36 kDa catalytic subunit (subunit C) and a 65 kDa constant regulatory subunit (PR65 or subunit A), that associates with a variety of regulatory subunits. Proteins that associate with the core dimer include three families of regulatory subunits B (the R2/B/PR55/B55, R3/B''/PR72/PR130/PR59 and R5/B'/B56 families), the 48 kDa variable regulatory subunit, viral proteins, and cell signaling molecules. Interacts with IPO9. Interacts with SGO1. Interacts with RAF1.

Its function is as follows. The PR65 subunit of protein phosphatase 2A serves as a scaffolding molecule to coordinate the assembly of the catalytic subunit and a variable regulatory B subunit. This is Serine/threonine-protein phosphatase 2A 65 kDa regulatory subunit A beta isoform (Ppp2r1b) from Mus musculus (Mouse).